The primary structure comprises 860 residues: Ubiquitin carboxyl-terminal hydrolase 13 (860 aa).

The UBP-type; degenerate zinc finger occupies 168 to 276; sequence QVSRHARSLR…EHLLHFGIDM (109 aa). Residues Cys192, Cys195, Cys212, and His225 each contribute to the Zn(2+) site. Positions 318–857 constitute a USP domain; sequence TGIKNLGNSC…LGYMYFYRRL (540 aa). The active-site Nucleophile is Cys327. The tract at residues 611-636 is disordered; the sequence is DLTPPIVIPEDTRDSSTNNSLESPEI. 2 UBA domains span residues 635-676 and 710-750; these read EIDE…IIAH and QPPE…IFTH. The segment covering 755–768 has biased composition (acidic residues); it reads DESEAMSDTADTEP. The segment at 755–795 is disordered; it reads DESEAMSDTADTEPNDNSFSNANAHTDSSLSPDQDLSSPRV. Positions 769–780 are enriched in polar residues; that stretch reads NDNSFSNANAHT. Over residues 781 to 793 the composition is skewed to low complexity; the sequence is DSSLSPDQDLSSP. The active-site Proton acceptor is the His819.

This sequence belongs to the peptidase C19 family.

It carries out the reaction Thiol-dependent hydrolysis of ester, thioester, amide, peptide and isopeptide bonds formed by the C-terminal Gly of ubiquitin (a 76-residue protein attached to proteins as an intracellular targeting signal).. Specifically inhibited by spautin-1 (specific and potent autophagy inhibitor-1), a derivative of MBCQ that binds to usp13 and inhibits deubiquitinase activity. Deubiquitinase that mediates deubiquitination of target proteins and is involved in various processes such as autophagy and endoplasmic reticulum-associated degradation (ERAD). This is Ubiquitin carboxyl-terminal hydrolase 13 (usp13) from Danio rerio (Zebrafish).